A 237-amino-acid chain; its full sequence is Probable Bax inhibitor 1 (237 aa).

Residues Met1 to Asn29 lie on the Cytoplasmic side of the membrane. A helical transmembrane segment spans residues Val30–Val50. At Thr51 to Arg52 the chain is on the lumenal side. Residues Leu53–Met73 form a helical membrane-spanning segment. At Thr74–Ala86 the chain is on the cytoplasmic side. The helical transmembrane segment at Ile87–Ile107 threads the bilayer. At Ala108–Ser112 the chain is on the lumenal side. Residues Ile113–Leu133 traverse the membrane as a helical segment. The Cytoplasmic portion of the chain corresponds to Tyr134 to Ser139. Residues Tyr140–Met160 form a helical membrane-spanning segment. Residues Asn161–Ser166 are Lumenal-facing. Residues Val167–Xaa187 form a helical membrane-spanning segment. At Asp188 to His206 the chain is on the cytoplasmic side. Residues Ser207 to Leu227 constitute an intramembrane region (helical). Residues Asn228–Lys237 lie on the Cytoplasmic side of the membrane.

This sequence belongs to the BI1 family. Highly abundant in testis.

Its subcellular location is the endoplasmic reticulum membrane. Its function is as follows. Suppressor of apoptosis. Modulates unfolded protein response signaling. Modulate ER calcium homeostasis by acting as a calcium-leak channel. This chain is Probable Bax inhibitor 1 (tmbim6), found in Paralichthys olivaceus (Bastard halibut).